The primary structure comprises 697 residues: Exocyst complex component 7 (697 aa).

Positions 1–384 are SEC8 and ARHQ binding; that stretch reads MIPPQEASAR…FSTVLTVFPI (384 aa). Coiled-coil stretches lie at residues 5 to 42 and 63 to 85; these read QEAS…TRNM and VHKQ…SCLD. Phosphoserine is present on Ser-133. The segment at 238-270 is disordered; it reads FRKSSSSSGVPYSPAIPNKRKDTPTKKPIKRPG.

This sequence belongs to the EXO70 family. In terms of assembly, the exocyst complex is composed of EXOC1, EXOC2, EXOC3, EXOC4, EXOC5, EXOC6, EXOC7 and EXOC8. Interacts with RAB11FIP3. Interacts with ARHQ in a GTP-dependent manner.

The protein resides in the cytoplasm. The protein localises to the cytosol. Its subcellular location is the cell membrane. It is found in the midbody. It localises to the midbody ring. In terms of biological role, component of the exocyst complex involved in the docking of exocytic vesicles with fusion sites on the plasma membrane. In adipocytes, plays a crucial role in targeting SLC2A4 vesicle to the plasma membrane in response to insulin, perhaps directing the vesicle to the precise site of fusion. It is required for neuron survival and plays an essential role in cortical development. The sequence is that of Exocyst complex component 7 (Exoc7) from Mus musculus (Mouse).